Consider the following 288-residue polypeptide: Alpha/beta hydrolase domain-containing protein 17B (288 aa).

Catalysis depends on charge relay system residues serine 170, aspartate 235, and histidine 264.

Belongs to the AB hydrolase superfamily. ABHD17 family. Post-translationally, palmitoylated on cysteine residues located in a cysteine cluster at the N-terminus which promotes membrane localization.

The protein resides in the cell membrane. It localises to the recycling endosome membrane. Its subcellular location is the cell projection. The protein localises to the dendritic spine. It is found in the postsynaptic density membrane. It catalyses the reaction S-hexadecanoyl-L-cysteinyl-[protein] + H2O = L-cysteinyl-[protein] + hexadecanoate + H(+). Functionally, hydrolyzes fatty acids from S-acylated cysteine residues in proteins. Has depalmitoylating activity towards nras. The sequence is that of Alpha/beta hydrolase domain-containing protein 17B from Xenopus laevis (African clawed frog).